The following is a 223-amino-acid chain: Endonuclease V (223 aa).

2 residues coordinate Mg(2+): Asp45 and Asp113.

This sequence belongs to the endonuclease V family. Mg(2+) serves as cofactor.

Its subcellular location is the cytoplasm. It catalyses the reaction Endonucleolytic cleavage at apurinic or apyrimidinic sites to products with a 5'-phosphate.. In terms of biological role, DNA repair enzyme involved in the repair of deaminated bases. Selectively cleaves double-stranded DNA at the second phosphodiester bond 3' to a deoxyinosine leaving behind the intact lesion on the nicked DNA. This chain is Endonuclease V, found in Dehalococcoides mccartyi (strain ATCC BAA-2100 / JCM 16839 / KCTC 5957 / BAV1).